Here is a 909-residue protein sequence, read N- to C-terminus: Protein translocase subunit SecA (909 aa).

ATP contacts are provided by residues glutamine 85, 103 to 107, and aspartate 512; that span reads GEGKT. The segment at 866–899 is disordered; that stretch reads HETSATGGEEEINKPVVKGKKIGRNDPCPCGSGK. Zn(2+)-binding residues include cysteine 893, cysteine 895, cysteine 904, and cysteine 905.

The protein belongs to the SecA family. Monomer and homodimer. Part of the essential Sec protein translocation apparatus which comprises SecA, SecYEG and auxiliary proteins SecDF. Other proteins may also be involved. The cofactor is Zn(2+).

The protein localises to the cell membrane. Its subcellular location is the cytoplasm. The enzyme catalyses ATP + H2O + cellular proteinSide 1 = ADP + phosphate + cellular proteinSide 2.. Functionally, part of the Sec protein translocase complex. Interacts with the SecYEG preprotein conducting channel. Has a central role in coupling the hydrolysis of ATP to the transfer of proteins into and across the cell membrane, serving as an ATP-driven molecular motor driving the stepwise translocation of polypeptide chains across the membrane. This Finegoldia magna (strain ATCC 29328 / DSM 20472 / WAL 2508) (Peptostreptococcus magnus) protein is Protein translocase subunit SecA.